Here is a 121-residue protein sequence, read N- to C-terminus: Apoptin (121 aa).

Disordered regions lie at residues 1–28 and 57–121; these read MNAL…LETP and LRSA…CIRL. A compositionally biased stretch (polar residues) spans 58–70; it reads RSATADNSESTGF. Basic and acidic residues predominate over residues 88–102; it reads RSCDPSEYRVSELKE.

The protein belongs to the gyrovirus apoptin family.

It localises to the host nucleus. Its function is as follows. May act as transcriptional regulator. Induces apoptosis in infected cells. Element of infectious replication cycle. The polypeptide is Apoptin (VP3) (Gallus gallus (Chicken)).